A 69-amino-acid chain; its full sequence is MKTNKYVEELQAKSTTELNETLVAAKKELFNLRFQNATNQLDNTSRIKDVRKNIARIQTVISQKAKAAN.

It belongs to the universal ribosomal protein uL29 family.

In Lachnoclostridium phytofermentans (strain ATCC 700394 / DSM 18823 / ISDg) (Clostridium phytofermentans), this protein is Large ribosomal subunit protein uL29.